A 127-amino-acid chain; its full sequence is Fluoride-specific ion channel FluC (127 aa).

4 helical membrane-spanning segments follow: residues 1 to 21 (MPQG…GACL), 39 to 59 (FGTL…YGVI), 72 to 92 (LIGV…VETL), and 105 to 125 (ANVF…IELM). Na(+) is bound by residues Gly-79 and Thr-82.

It belongs to the fluoride channel Fluc/FEX (TC 1.A.43) family.

The protein localises to the cell inner membrane. The enzyme catalyses fluoride(in) = fluoride(out). Its activity is regulated as follows. Na(+) is not transported, but it plays an essential structural role and its presence is essential for fluoride channel function. Fluoride-specific ion channel. Important for reducing fluoride concentration in the cell, thus reducing its toxicity. The chain is Fluoride-specific ion channel FluC from Alteromonas mediterranea (strain DSM 17117 / CIP 110805 / LMG 28347 / Deep ecotype).